Here is a 150-residue protein sequence, read N- to C-terminus: Ribosomal RNA large subunit methyltransferase H (150 aa).

Residues I71, A100, and 118-123 (LSEMTF) each bind S-adenosyl-L-methionine.

It belongs to the RNA methyltransferase RlmH family. As to quaternary structure, homodimer.

The protein resides in the cytoplasm. It catalyses the reaction pseudouridine(1915) in 23S rRNA + S-adenosyl-L-methionine = N(3)-methylpseudouridine(1915) in 23S rRNA + S-adenosyl-L-homocysteine + H(+). Specifically methylates the pseudouridine at position 1915 (m3Psi1915) in 23S rRNA. The chain is Ribosomal RNA large subunit methyltransferase H from Helicobacter acinonychis (strain Sheeba).